The chain runs to 196 residues: ATP-dependent Clp protease proteolytic subunit (196 aa).

Residue Ser-101 is the Nucleophile of the active site. The active site involves His-126.

It belongs to the peptidase S14 family. In terms of assembly, component of the chloroplastic Clp protease core complex.

Its subcellular location is the plastid. It localises to the chloroplast stroma. The catalysed reaction is Hydrolysis of proteins to small peptides in the presence of ATP and magnesium. alpha-casein is the usual test substrate. In the absence of ATP, only oligopeptides shorter than five residues are hydrolyzed (such as succinyl-Leu-Tyr-|-NHMec, and Leu-Tyr-Leu-|-Tyr-Trp, in which cleavage of the -Tyr-|-Leu- and -Tyr-|-Trp bonds also occurs).. In terms of biological role, cleaves peptides in various proteins in a process that requires ATP hydrolysis. Has a chymotrypsin-like activity. Plays a major role in the degradation of misfolded proteins. This chain is ATP-dependent Clp protease proteolytic subunit, found in Gossypium hirsutum (Upland cotton).